The sequence spans 302 residues: MKNKLTVQEMILTLQKFWSSNGCMLMQAYDTEKGAGTMSPYTFLRAIGPEPWNAAYVEPSRRPADGRYGENPNRLYQHHQFQVVMKPSPENIQELYLESLKLLGIDPLEHDIRFVEDNWENPSMGCAGLGWEVWLDGMEITQFTYFQQVGGLQCHPVTSEITYGLERLASYIQEVESVYDLEWTQGVKYGEIFVQPEYEHSKYSFEISNQEMLLENFDKFEKEAKRCIEESLVHPAYDYILKCSHTFNLLDARGAVSVTERAGYLARIRNMARSVAKIFVAEREKLGFPLLNKDQHVSKEAE.

This sequence belongs to the class-II aminoacyl-tRNA synthetase family. Tetramer of two alpha and two beta subunits.

It localises to the cytoplasm. The catalysed reaction is tRNA(Gly) + glycine + ATP = glycyl-tRNA(Gly) + AMP + diphosphate. The polypeptide is Glycine--tRNA ligase alpha subunit (Enterococcus faecalis (strain ATCC 700802 / V583)).